The primary structure comprises 377 residues: Lipoyl synthase, mitochondrial (377 aa).

[4Fe-4S] cluster-binding residues include Cys-103, Cys-108, Cys-114, Cys-134, Cys-138, Cys-141, and Ser-349. Residues 119–338 (EHGTQTATIM…EERGNELGFL (220 aa)) form the Radical SAM core domain.

Belongs to the radical SAM superfamily. Lipoyl synthase family. [4Fe-4S] cluster is required as a cofactor.

It is found in the mitochondrion. The enzyme catalyses [[Fe-S] cluster scaffold protein carrying a second [4Fe-4S](2+) cluster] + N(6)-octanoyl-L-lysyl-[protein] + 2 oxidized [2Fe-2S]-[ferredoxin] + 2 S-adenosyl-L-methionine + 4 H(+) = [[Fe-S] cluster scaffold protein] + N(6)-[(R)-dihydrolipoyl]-L-lysyl-[protein] + 4 Fe(3+) + 2 hydrogen sulfide + 2 5'-deoxyadenosine + 2 L-methionine + 2 reduced [2Fe-2S]-[ferredoxin]. Its pathway is protein modification; protein lipoylation via endogenous pathway; protein N(6)-(lipoyl)lysine from octanoyl-[acyl-carrier-protein]: step 2/2. Its function is as follows. Catalyzes the radical-mediated insertion of two sulfur atoms into the C-6 and C-8 positions of the octanoyl moiety bound to the lipoyl domains of lipoate-dependent enzymes, thereby converting the octanoylated domains into lipoylated derivatives. The sequence is that of Lipoyl synthase, mitochondrial from Drosophila melanogaster (Fruit fly).